A 1022-amino-acid chain; its full sequence is GPI ethanolamine phosphate transferase 1 (1022 aa).

Residues Met1–Arg6 lie on the Cytoplasmic side of the membrane. Residues Val7–Ile27 traverse the membrane as a helical segment. Residues Tyr28–Arg466 are Lumenal-facing. 2 N-linked (GlcNAc...) asparagine glycosylation sites follow: Asn148 and Asn433. A helical transmembrane segment spans residues Thr467–Leu487. The Cytoplasmic segment spans residues His488 to Arg498. A helical transmembrane segment spans residues Thr499–Tyr519. The Lumenal segment spans residues Gln520 to Ser560. A helical membrane pass occupies residues Val561–Leu581. Topologically, residues Val582–Asp589 are cytoplasmic. The helical transmembrane segment at Ile590 to Leu610 threads the bilayer. The Lumenal portion of the chain corresponds to Gly611 to Lys614. A helical transmembrane segment spans residues Leu615–Ala635. At Asn636 to Asp640 the chain is on the cytoplasmic side. The helical transmembrane segment at Met641–Phe661 threads the bilayer. The Lumenal portion of the chain corresponds to Glu662–Thr685. The chain crosses the membrane as a helical span at residues Ile686–Ala706. Over Ser707–Gly713 the chain is Cytoplasmic. The chain crosses the membrane as a helical span at residues Leu714 to Phe734. The Lumenal portion of the chain corresponds to Leu735–Met749. A run of 2 helical transmembrane segments spans residues Val750–Phe770 and Tyr771–His791. The Lumenal segment spans residues Thr792–Arg837. Asn805 carries N-linked (GlcNAc...) asparagine glycosylation. The chain crosses the membrane as a helical span at residues Val838–Ser858. Residues Val859–Gly880 are Cytoplasmic-facing. Residues Ala881–Leu901 form a helical membrane-spanning segment. Residues Asn902–Ser910 are Lumenal-facing. The helical transmembrane segment at Ala911–Val931 threads the bilayer. Residues Arg932–Phe947 lie on the Cytoplasmic side of the membrane. A helical membrane pass occupies residues Cys948–Ile968. The Lumenal segment spans residues Ser969 to Ser1022. Residue Asn989 is glycosylated (N-linked (GlcNAc...) asparagine). The segment at Pro998–Ser1022 is disordered.

The protein belongs to the PIGG/PIGN/PIGO family. PIGN subfamily.

The protein resides in the endoplasmic reticulum membrane. It participates in glycolipid biosynthesis; glycosylphosphatidylinositol-anchor biosynthesis. Ethanolamine phosphate transferase involved in glycosylphosphatidylinositol-anchor biosynthesis. Transfers ethanolamine phosphate to the first alpha-1,4-linked mannose of the glycosylphosphatidylinositol precursor of GPI-anchor. The chain is GPI ethanolamine phosphate transferase 1 (mcd4) from Aspergillus oryzae (strain ATCC 42149 / RIB 40) (Yellow koji mold).